A 914-amino-acid polypeptide reads, in one-letter code: Valine--tRNA ligase (914 aa).

Residues 47 to 57 (PYPTGELHMGH) carry the 'HIGH' region motif. The 'KMSKS' region motif lies at 552–556 (KMSKS). Residue Lys-555 participates in ATP binding.

The protein belongs to the class-I aminoacyl-tRNA synthetase family. ValS type 2 subfamily.

It localises to the cytoplasm. The catalysed reaction is tRNA(Val) + L-valine + ATP = L-valyl-tRNA(Val) + AMP + diphosphate. Its function is as follows. Catalyzes the attachment of valine to tRNA(Val). As ValRS can inadvertently accommodate and process structurally similar amino acids such as threonine, to avoid such errors, it has a 'posttransfer' editing activity that hydrolyzes mischarged Thr-tRNA(Val) in a tRNA-dependent manner. This chain is Valine--tRNA ligase, found in Methanopyrus kandleri (strain AV19 / DSM 6324 / JCM 9639 / NBRC 100938).